The primary structure comprises 59 residues: Large ribosomal subunit protein uL30 (59 aa).

It belongs to the universal ribosomal protein uL30 family. As to quaternary structure, part of the 50S ribosomal subunit.

This Leptospira borgpetersenii serovar Hardjo-bovis (strain JB197) protein is Large ribosomal subunit protein uL30.